The sequence spans 102 residues: Small ribosomal subunit protein uS10 (102 aa).

This sequence belongs to the universal ribosomal protein uS10 family. Part of the 30S ribosomal subunit.

Its function is as follows. Involved in the binding of tRNA to the ribosomes. The chain is Small ribosomal subunit protein uS10 from Rhodospirillum centenum (strain ATCC 51521 / SW).